The primary structure comprises 551 residues: Glucose-6-phosphate isomerase 2 (551 aa).

E353 functions as the Proton donor in the catalytic mechanism. Active-site residues include H384 and K512.

Belongs to the GPI family.

It localises to the cytoplasm. The enzyme catalyses alpha-D-glucose 6-phosphate = beta-D-fructose 6-phosphate. It participates in carbohydrate biosynthesis; gluconeogenesis. Its pathway is carbohydrate degradation; glycolysis; D-glyceraldehyde 3-phosphate and glycerone phosphate from D-glucose: step 2/4. Its function is as follows. Catalyzes the reversible isomerization of glucose-6-phosphate to fructose-6-phosphate. This chain is Glucose-6-phosphate isomerase 2, found in Colwellia psychrerythraea (strain 34H / ATCC BAA-681) (Vibrio psychroerythus).